The primary structure comprises 139 residues: Large ribosomal subunit protein bL17 (139 aa).

This sequence belongs to the bacterial ribosomal protein bL17 family. As to quaternary structure, part of the 50S ribosomal subunit. Contacts protein L32.

This Myxococcus xanthus (strain DK1622) protein is Large ribosomal subunit protein bL17.